A 340-amino-acid polypeptide reads, in one-letter code: Ketol-acid reductoisomerase (NADP(+)) (340 aa).

Residues 1–182 (MRVYYDRDCD…GGGRSGIIET (182 aa)) form the KARI N-terminal Rossmann domain. Residues 24–27 (YGSQ), Arg-48, Ser-51, Ser-53, and 83–86 (DELQ) contribute to the NADP(+) site. The active site involves His-108. Residue Gly-134 participates in NADP(+) binding. A KARI C-terminal knotted domain is found at 183 to 329 (NFRQECETDL…EKLRGMMPWI (147 aa)). Asp-191, Glu-195, Glu-227, and Glu-231 together coordinate Mg(2+). Ser-252 serves as a coordination point for substrate.

Belongs to the ketol-acid reductoisomerase family. Requires Mg(2+) as cofactor.

The catalysed reaction is (2R)-2,3-dihydroxy-3-methylbutanoate + NADP(+) = (2S)-2-acetolactate + NADPH + H(+). It catalyses the reaction (2R,3R)-2,3-dihydroxy-3-methylpentanoate + NADP(+) = (S)-2-ethyl-2-hydroxy-3-oxobutanoate + NADPH + H(+). It functions in the pathway amino-acid biosynthesis; L-isoleucine biosynthesis; L-isoleucine from 2-oxobutanoate: step 2/4. The protein operates within amino-acid biosynthesis; L-valine biosynthesis; L-valine from pyruvate: step 2/4. In terms of biological role, involved in the biosynthesis of branched-chain amino acids (BCAA). Catalyzes an alkyl-migration followed by a ketol-acid reduction of (S)-2-acetolactate (S2AL) to yield (R)-2,3-dihydroxy-isovalerate. In the isomerase reaction, S2AL is rearranged via a Mg-dependent methyl migration to produce 3-hydroxy-3-methyl-2-ketobutyrate (HMKB). In the reductase reaction, this 2-ketoacid undergoes a metal-dependent reduction by NADPH to yield (R)-2,3-dihydroxy-isovalerate. In Cereibacter sphaeroides (strain ATCC 17029 / ATH 2.4.9) (Rhodobacter sphaeroides), this protein is Ketol-acid reductoisomerase (NADP(+)).